A 253-amino-acid chain; its full sequence is Malonyl-[acyl-carrier protein] O-methyltransferase (253 aa).

Belongs to the methyltransferase superfamily.

It catalyses the reaction malonyl-[ACP] + S-adenosyl-L-methionine = malonyl-[ACP] methyl ester + S-adenosyl-L-homocysteine. It functions in the pathway cofactor biosynthesis; biotin biosynthesis. Its function is as follows. Converts the free carboxyl group of a malonyl-thioester to its methyl ester by transfer of a methyl group from S-adenosyl-L-methionine (SAM). It allows to synthesize pimeloyl-ACP via the fatty acid synthetic pathway. The chain is Malonyl-[acyl-carrier protein] O-methyltransferase from Pectobacterium atrosepticum (strain SCRI 1043 / ATCC BAA-672) (Erwinia carotovora subsp. atroseptica).